A 255-amino-acid polypeptide reads, in one-letter code: Large ribosomal subunit protein uL4 (255 aa).

Belongs to the universal ribosomal protein uL4 family. In terms of assembly, part of the 50S ribosomal subunit.

Functionally, one of the primary rRNA binding proteins, this protein initially binds near the 5'-end of the 23S rRNA. It is important during the early stages of 50S assembly. It makes multiple contacts with different domains of the 23S rRNA in the assembled 50S subunit and ribosome. Its function is as follows. Forms part of the polypeptide exit tunnel. The sequence is that of Large ribosomal subunit protein uL4 from Pyrococcus abyssi (strain GE5 / Orsay).